A 75-amino-acid chain; its full sequence is ASTSNYCNQMMKSRNLTQNRCKPVNTFVHESLADVQAVCSQKNVACKNGQTNCYQSYSTMSITDCRETGSSKYPN.

2 cysteine pairs are disulfide-bonded: C7/C65 and C46/C53. N15 carries N-linked (GlcNAc...) asparagine glycosylation. Substrate-binding positions include 22-26 (KPVNT), K47, and R66.

The protein belongs to the pancreatic ribonuclease family. Monomer. Interacts with and forms tight 1:1 complexes with RNH1. Dimerization of two such complexes may occur. Interaction with RNH1 inhibits this protein. Pancreas.

Its subcellular location is the secreted. It carries out the reaction an [RNA] containing cytidine + H2O = an [RNA]-3'-cytidine-3'-phosphate + a 5'-hydroxy-ribonucleotide-3'-[RNA].. The enzyme catalyses an [RNA] containing uridine + H2O = an [RNA]-3'-uridine-3'-phosphate + a 5'-hydroxy-ribonucleotide-3'-[RNA].. Endonuclease that catalyzes the cleavage of RNA on the 3' side of pyrimidine nucleotides. Acts on single-stranded and double-stranded RNA. This Oryx leucoryx (Arabian oryx) protein is Ribonuclease pancreatic (rnase1).